The chain runs to 425 residues: UDP-N-acetylglucosamine 1-carboxyvinyltransferase (425 aa).

A phosphoenolpyruvate-binding site is contributed by 22-23 (KN). Arginine 93 is a binding site for UDP-N-acetyl-alpha-D-glucosamine. The active-site Proton donor is the cysteine 117. At cysteine 117 the chain carries 2-(S-cysteinyl)pyruvic acid O-phosphothioketal. UDP-N-acetyl-alpha-D-glucosamine is bound by residues 122-126 (RPVDL), 162-165 (KVSV), aspartate 307, and isoleucine 329.

The protein belongs to the EPSP synthase family. MurA subfamily.

The protein localises to the cytoplasm. The catalysed reaction is phosphoenolpyruvate + UDP-N-acetyl-alpha-D-glucosamine = UDP-N-acetyl-3-O-(1-carboxyvinyl)-alpha-D-glucosamine + phosphate. It participates in cell wall biogenesis; peptidoglycan biosynthesis. Cell wall formation. Adds enolpyruvyl to UDP-N-acetylglucosamine. This is UDP-N-acetylglucosamine 1-carboxyvinyltransferase from Pasteurella multocida (strain Pm70).